The following is a 150-amino-acid chain: FAD synthase (150 aa).

ATP-binding positions include 8 to 9 (AF), 13 to 16 (HPGH), Asp95, and His122.

It belongs to the archaeal FAD synthase family. In terms of assembly, homodimer. The cofactor is a divalent metal cation.

The enzyme catalyses FMN + ATP + H(+) = FAD + diphosphate. It participates in cofactor biosynthesis; FAD biosynthesis; FAD from FMN: step 1/1. Functionally, catalyzes the transfer of the AMP portion of ATP to flavin mononucleotide (FMN) to produce flavin adenine dinucleotide (FAD) coenzyme. The chain is FAD synthase from Methanobrevibacter ruminantium (strain ATCC 35063 / DSM 1093 / JCM 13430 / OCM 146 / M1) (Methanobacterium ruminantium).